We begin with the raw amino-acid sequence, 210 residues long: Dephospho-CoA kinase (210 aa).

The DPCK domain occupies 4-202 (WVGLTGGIGS…AFYSGIFASK (199 aa)). Residue 12–17 (GSGKSA) coordinates ATP.

This sequence belongs to the CoaE family.

The protein resides in the cytoplasm. The enzyme catalyses 3'-dephospho-CoA + ATP = ADP + CoA + H(+). Its pathway is cofactor biosynthesis; coenzyme A biosynthesis; CoA from (R)-pantothenate: step 5/5. Catalyzes the phosphorylation of the 3'-hydroxyl group of dephosphocoenzyme A to form coenzyme A. The sequence is that of Dephospho-CoA kinase from Neisseria meningitidis serogroup B (strain ATCC BAA-335 / MC58).